The primary structure comprises 694 residues: Transcription activator of gluconeogenesis Pc22g08580 (694 aa).

Positions 1–61 are disordered; it reads MNMETKNGSP…DPSRPRRKKA (61 aa). Positions 17–55 are enriched in basic and acidic residues; that stretch reads SGERDSADITEHEQMDVKPKTNGDSKADRKAANAKDPSR. Positions 65 to 93 form a DNA-binding region, zn(2)-C6 fungal-type; sequence CFACQRAHLTCGDERPCQRCIKRGLQDAC. Disordered regions lie at residues 126 to 240, 276 to 300, and 552 to 582; these read TLRN…GPFF, AAGD…AQFS, and TGGS…GTGR. Residues 132–141 are compositionally biased toward polar residues; sequence PISRNGTNAV. Residues 142–171 show a composition bias toward low complexity; the sequence is NSNQQHSQQHPQQPTNPTNNNFYPTPQTQT. 3 stretches are compositionally biased toward polar residues: residues 172 to 234, 281 to 300, and 552 to 581; these read GSYN…SQNP, PTDS…AQFS, and TGGS…SGTG.

Belongs to the ERT1/acuK family.

It is found in the nucleus. Functionally, transcription factor which regulates nonfermentable carbon utilization. Activator of gluconeogenetic genes. The sequence is that of Transcription activator of gluconeogenesis Pc22g08580 from Penicillium rubens (strain ATCC 28089 / DSM 1075 / NRRL 1951 / Wisconsin 54-1255) (Penicillium chrysogenum).